Reading from the N-terminus, the 256-residue chain is Cilia- and flagella-associated protein 410 (256 aa).

3 LRR repeats span residues 19–40 (SVRKLNCWGSRLTDISICQEMP), 41–62 (SLEVITLSVNSISTLEPVSRCQ), and 63–84 (RLSELYLRRNRIPSLAELFYLK). The LRRCT domain maps to 97 to 137 (NPCCGTSPHRYRMTVLRTLPRLQKLDNQAVTEEELSRALSE). 2 disordered regions span residues 129 to 156 (EELSRALSEGEEITAAPEREGTGHGGPK) and 168 to 212 (AETG…SSHR). 2 positions are modified to phosphoserine: serine 136 and serine 177.

In terms of assembly, found in a complex with CFAP410, NEK1 and SPATA7. Interacts with NEK1. Widely expressed. Expressed in the retina.

It is found in the mitochondrion. The protein resides in the cytoplasm. The protein localises to the cytoskeleton. Its subcellular location is the cilium basal body. It localises to the cell projection. It is found in the cilium. The protein resides in the photoreceptor outer segment. Plays a role in cilia formation and/or maintenance. Plays a role in the regulation of cell morphology and cytoskeletal organization. Involved in DNA damage repair. The protein is Cilia- and flagella-associated protein 410 of Homo sapiens (Human).